Reading from the N-terminus, the 622-residue chain is Kinesin light chain 2 (622 aa).

Residues 78–143 adopt a coiled-coil conformation; it reads ILALSSHLGA…KQHLLFMSQI (66 aa). Basic and acidic residues predominate over residues 145–164; that stretch reads KLDEDASPNEEKGDVPKDTL. The interval 145 to 191 is disordered; sequence KLDEDASPNEEKGDVPKDTLDDLFPNEDEQSPAPSPGGGDVSGQHGG. 3 positions are modified to phosphoserine: S151, S175, and S179. Over residues 180–190 the composition is skewed to gly residues; that stretch reads PGGGDVSGQHG. TPR repeat units lie at residues 198-231, 240-273, 282-315, 324-357, and 366-399; these read LRTLHNLVIQYASQGRYEVAVPLCKQALEDLEKT, ATMLNILALVYRDQNKYKEAAHLLNDALAIREKT, AATLNNLAVLYGKRGKYKEAEPLCKRALEIREKV, AKQLSNLALLCQNQGKAEEVEYYYRRALEIYATR, and AKTKNNLASCYLKQGKYQDAETLYKEILTRAHEK. S445 is subject to Phosphoserine. Residues 449 to 482 form a TPR 6 repeat; it reads NTTLRSLGALYRRQGKLEAAHTLEDCASRNRKQG. Disordered regions lie at residues 476–548 and 563–622; these read SRNR…SFGK and KLQG…SLVG. The span at 493-509 shows a compositional bias: basic and acidic residues; that stretch reads ELLKDGSGRRGDRRSSR. Residues S508 and S521 each carry the phosphoserine modification. Residues 538 to 547 show a composition bias toward low complexity; that stretch reads GSLRRSGSFG. Phosphoserine occurs at positions 581, 582, 589, 608, 610, and 615. A compositionally biased stretch (low complexity) spans 601–622; sequence LSDSRTLSSSSMDLSRRSSLVG.

This sequence belongs to the kinesin light chain family. In terms of assembly, oligomeric complex composed of two heavy chains and two light chains. Interacts (via TPR repeats) with PLEKHM2.

Its subcellular location is the cytoplasm. The protein localises to the cytoskeleton. The protein resides in the lysosome membrane. In terms of biological role, kinesin is a microtubule-associated force-producing protein that plays a role in organelle transport. The light chain functions in coupling of cargo to the heavy chain or in the modulation of its ATPase activity. Through binding with PLEKHM2 and ARL8B, recruits kinesin-1 to lysosomes and hence direct lysosomes movement toward microtubule plus ends. This is Kinesin light chain 2 from Homo sapiens (Human).